The primary structure comprises 196 residues: ATP-dependent Clp protease proteolytic subunit (196 aa).

The Nucleophile role is filled by Ser98. His123 is an active-site residue.

The protein belongs to the peptidase S14 family. As to quaternary structure, fourteen ClpP subunits assemble into 2 heptameric rings which stack back to back to give a disk-like structure with a central cavity, resembling the structure of eukaryotic proteasomes.

The protein localises to the cytoplasm. The catalysed reaction is Hydrolysis of proteins to small peptides in the presence of ATP and magnesium. alpha-casein is the usual test substrate. In the absence of ATP, only oligopeptides shorter than five residues are hydrolyzed (such as succinyl-Leu-Tyr-|-NHMec, and Leu-Tyr-Leu-|-Tyr-Trp, in which cleavage of the -Tyr-|-Leu- and -Tyr-|-Trp bonds also occurs).. In terms of biological role, cleaves peptides in various proteins in a process that requires ATP hydrolysis. Has a chymotrypsin-like activity. Plays a major role in the degradation of misfolded proteins. ClpXP is involved in the complete degradation of the Site-2 clipped anti-sigma-W factor RsiW. This results in the release of SigW and the transcription activation of the genes under the control of the sigma-W factor. This Geobacillus kaustophilus (strain HTA426) protein is ATP-dependent Clp protease proteolytic subunit.